Here is a 274-residue protein sequence, read N- to C-terminus: Acetyl-coenzyme A carboxylase carboxyl transferase subunit alpha (274 aa).

Residues 1–245 (MENSQELTPW…RENLKKAIEG (245 aa)) enclose the CoA carboxyltransferase C-terminal domain.

The protein belongs to the AccA family. In terms of assembly, acetyl-CoA carboxylase is a heterohexamer composed of biotin carboxyl carrier protein (AccB), biotin carboxylase (AccC) and two subunits each of ACCase subunit alpha (AccA) and ACCase subunit beta (AccD).

The protein resides in the cytoplasm. The catalysed reaction is N(6)-carboxybiotinyl-L-lysyl-[protein] + acetyl-CoA = N(6)-biotinyl-L-lysyl-[protein] + malonyl-CoA. Its pathway is lipid metabolism; malonyl-CoA biosynthesis; malonyl-CoA from acetyl-CoA: step 1/1. In terms of biological role, component of the acetyl coenzyme A carboxylase (ACC) complex. First, biotin carboxylase catalyzes the carboxylation of biotin on its carrier protein (BCCP) and then the CO(2) group is transferred by the carboxyltransferase to acetyl-CoA to form malonyl-CoA. This is Acetyl-coenzyme A carboxylase carboxyl transferase subunit alpha from Clostridium acetobutylicum (strain ATCC 824 / DSM 792 / JCM 1419 / IAM 19013 / LMG 5710 / NBRC 13948 / NRRL B-527 / VKM B-1787 / 2291 / W).